A 185-amino-acid polypeptide reads, in one-letter code: Ribosome-recycling factor (185 aa).

Belongs to the RRF family.

Its subcellular location is the cytoplasm. Its function is as follows. Responsible for the release of ribosomes from messenger RNA at the termination of protein biosynthesis. May increase the efficiency of translation by recycling ribosomes from one round of translation to another. The sequence is that of Ribosome-recycling factor from Xanthomonas oryzae pv. oryzae (strain MAFF 311018).